A 433-amino-acid polypeptide reads, in one-letter code: L-lysine 2,3-aminomutase (433 aa).

The region spanning 122–334 (HRYPDRVLFY…SLIGHTTGFA (213 aa)) is the Radical SAM core domain. [4Fe-4S] cluster contacts are provided by C136, C140, and C143. C279 contacts Zn(2+). K348 bears the N6-(pyridoxal phosphate)lysine mark. Zn(2+)-binding residues include C389, C392, and C396.

It belongs to the radical SAM superfamily. KamA family. Requires [4Fe-4S] cluster as cofactor. Pyridoxal 5'-phosphate is required as a cofactor. The cofactor is Zn(2+).

It catalyses the reaction L-lysine = (3S)-3,6-diaminohexanoate. In terms of biological role, catalyzes the interconversion of L-alpha-lysine and L-beta-lysine. Is involved in the biosynthesis pathway of N6-acetyl-beta-lysine, a compatible solute produced by methanogenic archaea that helps cells to cope with salt stress. The polypeptide is L-lysine 2,3-aminomutase (ablA) (Methanococcus maripaludis (strain DSM 14266 / JCM 13030 / NBRC 101832 / S2 / LL)).